The primary structure comprises 98 residues: DNA-directed RNA polymerase subunit Rpo11 (98 aa).

The protein belongs to the archaeal Rpo11/eukaryotic RPB11/RPC19 RNA polymerase subunit family. Part of the RNA polymerase complex.

It is found in the cytoplasm. The catalysed reaction is RNA(n) + a ribonucleoside 5'-triphosphate = RNA(n+1) + diphosphate. DNA-dependent RNA polymerase (RNAP) catalyzes the transcription of DNA into RNA using the four ribonucleoside triphosphates as substrates. The sequence is that of DNA-directed RNA polymerase subunit Rpo11 from Korarchaeum cryptofilum (strain OPF8).